Reading from the N-terminus, the 558-residue chain is uncharacterized protein (558 aa).

The next 12 helical transmembrane spans lie at 21-41 (IFCFYIYCILFGSLLLFLPIA), 69-89 (FLDALFLSTSAFSDTGLSTVV), 100-120 (IVLAVLLQLGGIGFVVIAFLA), 160-180 (IIFLFIVELIYGFLYGILFYF), 220-240 (AFQAGFFHSLSAVNNAGIDLI), 251-271 (GLGIIIQWLTISQIIFGGIGY), 303-323 (VITNIVVILLFFTLLLMVEFI), 386-406 (VFPVASEIQTTKIIIALAMFI), 413-433 (TAGGIRTTTLAVIFLALVAKF), 454-474 (AFLVLIISLIAVLLTAVLLPL), 479-499 (PVSFIDALFETTSAFGTVGLS), and 519-539 (ALCLLMVMGQVGVSSSVLTFV).

This sequence belongs to the TrkH potassium transport family.

It localises to the cell membrane. This is an uncharacterized protein from Mycoplasma genitalium (strain ATCC 33530 / DSM 19775 / NCTC 10195 / G37) (Mycoplasmoides genitalium).